Reading from the N-terminus, the 368-residue chain is MNKTITALTIIMASFATNASVLPETPVPFKSGTGAIDNDTVYIGLGSAGTAWYKLDTQAKDKKWTALAAFPGGPRDQATSAFIDGNLYVFGGIGKNSEGLTQVFNDVHKYNPKTNSWVKLMSHAPMGMAGHVTFVHNGKAYVTGGVNQNIFNGYFEDLNEAGKDSTTIDKINAHYFDKKAEDYFFNKFLLSFDPSTQQWSYAGESPWYGTAGAAVVNKGDKTWLINGEAKPGLRTDAVFELDFTGNNLKWNKLAPVASPDGVAGGFAGMSNDSLIFAGGAGFKGSRENYQNGKNYAHEGLKKSYSADIHLWHNGKWDKSGELSQGRAYGVSLPWNNSLLIIGGETAGGKAVTDSVLISVKDNKVTVQN.

An N-terminal signal peptide occupies residues 1–19 (MNKTITALTIIMASFATNA). Kelch repeat units lie at residues 40–84 (TVYI…AFID), 86–137 (NLYV…FVHN), 139–173 (KAYVTGGVNQNIFNGYFEDLNEAGKDSTTIDKINA), 174–219 (HYFD…VNKG), 222–265 (TWLI…VAGG), 287–336 (ENYQ…PWNN), and 338–367 (LLIIGGETAGGKAVTDSVLISVKDNKVTVQ). The active-site Proton acceptor is the Glu228.

The protein belongs to the NanM family. Homodimer.

The protein resides in the periplasm. It carries out the reaction N-acetyl-alpha-neuraminate = N-acetyl-beta-neuraminate. Converts alpha-N-acetylneuranimic acid (Neu5Ac) to the beta-anomer, accelerating the equilibrium between the alpha- and beta-anomers. Probably facilitates sialidase-negative bacteria to compete successfully for limited amounts of extracellular Neu5Ac, which is likely taken up in the beta-anomer. In addition, the rapid removal of sialic acid from solution might be advantageous to the bacterium to damp down host responses. This Escherichia coli O1:K1 / APEC protein is N-acetylneuraminate epimerase.